Reading from the N-terminus, the 169-residue chain is Cell division inhibitor SulA (169 aa).

A disordered region spans residues 1–22 (MHTSIYANRSTSFSPSAGNDTQ). The segment at 106 to 112 (ALRTGNY) is ftsZ binding. The lon protease binding stretch occupies residues 162-169 (KIHSNLYH).

This sequence belongs to the SulA family. Interacts with FtsZ. In terms of processing, is rapidly cleaved and degraded by the Lon protease once DNA damage is repaired.

Component of the SOS system and an inhibitor of cell division. Accumulation of SulA causes rapid cessation of cell division and the appearance of long, non-septate filaments. In the presence of GTP, binds a polymerization-competent form of FtsZ in a 1:1 ratio, thus inhibiting FtsZ polymerization and therefore preventing it from participating in the assembly of the Z ring. This mechanism prevents the premature segregation of damaged DNA to daughter cells during cell division. The chain is Cell division inhibitor SulA from Enterobacter sp. (strain 638).